A 421-amino-acid polypeptide reads, in one-letter code: Serine hydroxymethyltransferase (421 aa).

(6S)-5,6,7,8-tetrahydrofolate contacts are provided by residues L118 and 122–124; that span reads GHL. K226 bears the N6-(pyridoxal phosphate)lysine mark. E242 contributes to the (6S)-5,6,7,8-tetrahydrofolate binding site.

Belongs to the SHMT family. As to quaternary structure, homodimer. Pyridoxal 5'-phosphate is required as a cofactor.

It localises to the cytoplasm. The enzyme catalyses (6R)-5,10-methylene-5,6,7,8-tetrahydrofolate + glycine + H2O = (6S)-5,6,7,8-tetrahydrofolate + L-serine. The protein operates within one-carbon metabolism; tetrahydrofolate interconversion. It participates in amino-acid biosynthesis; glycine biosynthesis; glycine from L-serine: step 1/1. Its function is as follows. Catalyzes the reversible interconversion of serine and glycine with tetrahydrofolate (THF) serving as the one-carbon carrier. This reaction serves as the major source of one-carbon groups required for the biosynthesis of purines, thymidylate, methionine, and other important biomolecules. Also exhibits THF-independent aldolase activity toward beta-hydroxyamino acids, producing glycine and aldehydes, via a retro-aldol mechanism. This chain is Serine hydroxymethyltransferase, found in Mycoplasmopsis synoviae (strain 53) (Mycoplasma synoviae).